Consider the following 278-residue polypeptide: Pantothenate synthetase (278 aa).

An ATP-binding site is contributed by 26-33; the sequence is MGNLHEGH. Catalysis depends on H33, which acts as the Proton donor. Q57 serves as a coordination point for (R)-pantoate. Q57 provides a ligand contact to beta-alanine. 144–147 serves as a coordination point for ATP; it reads GKKD. Q150 contributes to the (R)-pantoate binding site. ATP is bound by residues G173 and 181 to 184; that span reads LSSR.

It belongs to the pantothenate synthetase family. As to quaternary structure, homodimer.

The protein localises to the cytoplasm. The catalysed reaction is (R)-pantoate + beta-alanine + ATP = (R)-pantothenate + AMP + diphosphate + H(+). The protein operates within cofactor biosynthesis; (R)-pantothenate biosynthesis; (R)-pantothenate from (R)-pantoate and beta-alanine: step 1/1. In terms of biological role, catalyzes the condensation of pantoate with beta-alanine in an ATP-dependent reaction via a pantoyl-adenylate intermediate. This is Pantothenate synthetase from Neisseria meningitidis serogroup B (strain ATCC BAA-335 / MC58).